The primary structure comprises 346 residues: Melatonin receptor type 1C (346 aa).

Residues 1–26 (MERPGSNGSCSGCRLEGGPAARAASG) are Extracellular-facing. An N-linked (GlcNAc...) asparagine glycan is attached at Asn7. The helical transmembrane segment at 27-47 (LAAVLIVTIVVDVLGNALVIL) threads the bilayer. Residues 48–60 (SVLRNKKLRNAGN) lie on the Cytoplasmic side of the membrane. The chain crosses the membrane as a helical span at residues 61 to 81 (IFVVSLSVADLVVAVYPYPLI). Residues 82-99 (LSAIFHNGWTMGNIHCQI) lie on the Extracellular side of the membrane. A disulfide bridge links Cys97 with Cys174. The chain crosses the membrane as a helical span at residues 100–120 (SGFLMGLSVIGSIFNITAIAI). Over 121 to 139 (NRYCYICHSLRYDKLFNLK) the chain is Cytoplasmic. Residues 140-160 (NTCCYICLTWTLTVVAIVPNF) traverse the membrane as a helical segment. The Extracellular segment spans residues 161-184 (FVGSLQYDPRIYSCTFAQTVSTSY). Residues 185 to 205 (TITVVVVHFIVPLSIVTFCYL) form a helical membrane-spanning segment. Over 206–237 (RIWILVIQVKHRVRQDCKQKIRAADIRNFLTM) the chain is Cytoplasmic. A helical transmembrane segment spans residues 238 to 258 (FVVFVLFAVCWGPLNFIGLAV). The Extracellular portion of the chain corresponds to 259–271 (SINPSKVQPHIPE). Residues 272 to 292 (WLFVLSYFMAYFNSCLNAVIY) form a helical membrane-spanning segment. Residues 293–346 (GLLNQNFRKEYKRILLMLRTPRLLFIDVSKGGTEGLKSKPSPAVTNNNQAEIHL) are Cytoplasmic-facing. Positions 326-346 (EGLKSKPSPAVTNNNQAEIHL) are disordered. Polar residues predominate over residues 335-346 (AVTNNNQAEIHL).

It belongs to the G-protein coupled receptor 1 family. As to expression, expressed in optic tectum, neostriatum, hypothalamus, thalamus and pineal gland, less in cerebellum and retina.

The protein resides in the cell membrane. In terms of biological role, high affinity receptor for melatonin. The activity of this receptor is mediated by pertussis toxin sensitive G proteins that inhibits adenylate cyclase activity. This is Melatonin receptor type 1C from Gallus gallus (Chicken).